Consider the following 291-residue polypeptide: Tryptophan synthase alpha chain (291 aa).

Residues Glu69 and Asp80 each act as proton acceptor in the active site.

It belongs to the TrpA family. Tetramer of two alpha and two beta chains.

It catalyses the reaction (1S,2R)-1-C-(indol-3-yl)glycerol 3-phosphate + L-serine = D-glyceraldehyde 3-phosphate + L-tryptophan + H2O. Its pathway is amino-acid biosynthesis; L-tryptophan biosynthesis; L-tryptophan from chorismate: step 5/5. In terms of biological role, the alpha subunit is responsible for the aldol cleavage of indoleglycerol phosphate to indole and glyceraldehyde 3-phosphate. The polypeptide is Tryptophan synthase alpha chain (Bifidobacterium longum (strain NCC 2705)).